The sequence spans 367 residues: Alginate lyase (367 aa).

Residues 1–27 (MKTSHLIRIALPGALAAALLASQVSQA) form the signal peptide. Residues 65–66 (SK), 138–139 (HT), and tyrosine 256 each bind substrate.

Belongs to the polysaccharide lyase 5 family.

It is found in the periplasm. It catalyses the reaction Eliminative cleavage of alginate to give oligosaccharides with 4-deoxy-alpha-L-erythro-hex-4-enuronosyl groups at their non-reducing ends and beta-D-mannuronate at their reducing end.. In terms of biological role, catalyzes the depolymerization of alginate by cleaving the beta-1,4 glycosidic bond between two adjacent sugar residues via a beta-elimination mechanism. May serve to degrade mislocalized alginate that is trapped in the periplasmic space. The polypeptide is Alginate lyase (Pseudomonas aeruginosa (strain LESB58)).